A 90-amino-acid polypeptide reads, in one-letter code: UPF0367 protein Npun_R4552 (90 aa).

The protein belongs to the UPF0367 family.

The chain is UPF0367 protein Npun_R4552 from Nostoc punctiforme (strain ATCC 29133 / PCC 73102).